The chain runs to 502 residues: MSIQECPESPMLEGEEGRGVERDSDRDSAVDSASEISDGGRTGEKEEGIGICLPREKGDLMHNHFEISDQSALSSASLNEEQFEDYGEGEDGDCTTSSPCPDDEIRINGCSDLGSSVSSSAGQTPRKIHNVDDQMEVFCSQCCKRVSLLSDLENRLKNLKTSSPNRKISSTAFGRKLLHNSNISSSNGSTEDLFHDSTDSSDLDITEKVSYLDKKVTELENEILMSGDVKTKLKQENIQLVHRIHELEEQLKDQETRAEKIMEDELRRHRDAYIRLEKDKNTQIELLRNRLHQLEDENGKMAMNMNRLKSQTEKLDEEKQRMTDKLEDTSLRLKDEMDLYKKMMDKLRQNRQEFQRERDTMQELIEDLRRELEHLQLYKLEAERAGRGRRSSISLSEYSSRTRESELEQEVRRLKQDNQKLREQNEDLNGQLLSLSLHEAKNLFATQTKAQSLAMEIDHASRDQLLEALKQQEEINLRLRQYMDKIILSILDHNPSILEIKN.

Disordered stretches follow at residues Met-1 to Ile-49 and Ser-71 to Ser-98. Residues Glu-15–Ala-29 show a composition bias toward basic and acidic residues. Residues Ser-71–Glu-80 show a composition bias toward polar residues. Acidic residues predominate over residues Glu-81–Asp-93. Positions Asp-228–Tyr-482 form a coiled coil. The region spanning Glu-439–Lys-501 is the FIP-RBD domain.

Homodimer. Forms a complex with Rab11 (rab11a or rab11b) and arf6.

The protein resides in the recycling endosome membrane. It localises to the cleavage furrow. Its subcellular location is the midbody. It is found in the cytoplasmic vesicle. Functionally, acts as a regulator of endocytic traffic by participating in membrane delivery. Required for the abscission step in cytokinesis, possibly by acting as an 'address tag' delivering recycling endosome membranes to the cleavage furrow during late cytokinesis. This Danio rerio (Zebrafish) protein is Rab11 family-interacting protein 4B (rab11fip4b).